Reading from the N-terminus, the 713-residue chain is MVKLAKAGKTHGESKKMAPPPKEVEEDSEDEEMSEDEDDSSGEEEVVIPQKKGKKATTTPAKKVVVSQTKKAAVPTPAKKAAVTPGKKAAATPAKKAVTPAKVVPTPGKKGAAQAKALVPTPGKKGAVTPAKGAKNGKNAKKEDSDEDEDEEDEDDSDEDEDEEDEFEPPVVKGVKPAKAAPAAPASEDEDEEDDDDEDDDDDDEEEEEEDDSEEEVMEITPAKGKKTPAKVVPVKAKSVAEEEEDDEDDEDEEEDEDEEDEEDDEDEDEEEEEEPVKAAPGKRKKEMTKQKEAPEAKKQKIEGSEPTTPFNLFIGNLNPNKSVAELKVAISELFAKNDLAAVDVRTGTNRKFGYVDFESAEDLEKALELTGLKVFGNEIKLEKPKGRDSKKVRAARTLLAKNLSFNITEDELKEVFEDAVEIRLVSQDGRSKGIAYIEFKSEADAEKNLEEKQGAEIDGRSVSLYYTGEKGQRQERTGKNSTWSGESKTLVLSNLSYSATEETLQEVFEKATFIKVPQNPHGKSKGYAFIEFASFEDAKEALNSCNKMEIEGRTIRLELQGPRGSPNARSQPSKTLFVKGLSEDTTEETLKESFEGSVRARIVTDRETGSSKGFGFVDFNSEEDAKAAKEAMEDGEIDGNKVTLDWAKPKGEGGFGGRGGGRGGFGGRGGGRGGRGGFGGRGRGGFGGRGGFRGGRGGGGDFKPQGKKTKFE.

The tract at residues 1–309 is disordered; the sequence is MVKLAKAGKT…QKIEGSEPTT (309 aa). An N6-acetyllysine mark is found at K9, K15, and K16. The segment covering 24 to 46 has biased composition (acidic residues); the sequence is VEEDSEDEEMSEDEDDSSGEEEV. A phosphoserine mark is found at S28, S34, S40, and S41. The segment covering 56–111 has biased composition (low complexity); sequence ATTTPAKKVVVSQTKKAAVPTPAKKAAVTPGKKAAATPAKKAVTPAKVVPTPGKKG. The stretch at 58 to 65 is repeat 1; it reads TTPAKKVV. The segment at 58–135 is 8 X 8 AA tandem repeats of X-T-P-X-K-K-X-X; sequence TTPAKKVVVS…GAVTPAKGAK (78 aa). S67 is modified (phosphoserine). A phosphothreonine mark is found at T69, T76, T84, and T92. A run of 3 repeats spans residues 75–82, 83–90, and 91–98. K96 carries the post-translational modification N6-acetyllysine. The residue at position 99 (T99) is a Phosphothreonine. The stretch at 99-104 is one 5; truncated repeat; that stretch reads TPAKVV. N6-acetyllysine is present on K102. Repeat unit 6 spans residues 105–112; sequence PTPGKKGA. T106 bears the Phosphothreonine mark. Residues K109 and K116 each carry the N6-acetyllysine modification. 2 repeat units span residues 120-127 and 128-135. A Phosphothreonine modification is found at T121. K124 is subject to N6-acetyllysine. Residues S145 and S157 each carry the phosphoserine modification. Acidic residues predominate over residues 145–168; it reads SDEDEDEEDEDDSDEDEDEEDEFE. Over residues 169–186 the composition is skewed to low complexity; that stretch reads PPVVKGVKPAKAAPAAPA. A phosphoserine mark is found at S187 and S213. Residues 187-218 are compositionally biased toward acidic residues; the sequence is SEDEDEEDDDDEDDDDDDEEEEEEDDSEEEVM. Residue T221 is modified to Phosphothreonine. The segment covering 242-275 has biased composition (acidic residues); that stretch reads EEEEDDEDDEDEEEDEDEEDEEDDEDEDEEEEEE. The span at 288–304 shows a compositional bias: basic and acidic residues; it reads MTKQKEAPEAKKQKIEG. Residue K301 forms a Glycyl lysine isopeptide (Lys-Gly) (interchain with G-Cter in SUMO1); alternate linkage. Residue K301 forms a Glycyl lysine isopeptide (Lys-Gly) (interchain with G-Cter in SUMO2); alternate linkage. Phosphoserine is present on S305. 2 consecutive RRM domains span residues 311–387 and 397–470; these read FNLF…KPKG and RTLL…YTGE. K322 is subject to N6-acetyllysine. K328 participates in a covalent cross-link: Glycyl lysine isopeptide (Lys-Gly) (interchain with G-Cter in SUMO1); alternate. K328 participates in a covalent cross-link: Glycyl lysine isopeptide (Lys-Gly) (interchain with G-Cter in SUMO2); alternate. Position 352 is an N6-acetyllysine (K352). S360 is modified (phosphoserine). T371 carries the phosphothreonine modification. K374 participates in a covalent cross-link: Glycyl lysine isopeptide (Lys-Gly) (interchain with G-Cter in SUMO2). A Glycyl lysine isopeptide (Lys-Gly) (interchain with G-Cter in SUMO2); alternate cross-link involves residue K381. K381 carries the N6-acetyllysine; alternate modification. K402 carries the N6-acetyllysine modification. A Phosphoserine modification is found at S405. T409 is subject to Phosphothreonine. K448 is modified (N6-acetyllysine). Phosphoserine occurs at positions 462 and 464. N6-acetyllysine is present on residues K471 and K480. The region spanning 489 to 563 is the RRM 3 domain; sequence KTLVLSNLSY…RTIRLELQGP (75 aa). K516 is covalently cross-linked (Glycyl lysine isopeptide (Lys-Gly) (interchain with G-Cter in SUMO2); alternate). Position 516 is an N6-acetyllysine; alternate (K516). K524 is subject to N6-acetyllysine. A Phosphoserine modification is found at S566. Position 575 is an N6-acetyllysine (K575). Positions 575–650 constitute an RRM 4 domain; sequence KTLFVKGLSE…NKVTLDWAKP (76 aa). Residue K580 forms a Glycyl lysine isopeptide (Lys-Gly) (interchain with G-Cter in SUMO2); alternate linkage. Residue K580 is modified to N6-acetyllysine; alternate. S583 bears the Phosphoserine mark. K592 is covalently cross-linked (Glycyl lysine isopeptide (Lys-Gly) (interchain with G-Cter in SUMO1); alternate). K592 participates in a covalent cross-link: Glycyl lysine isopeptide (Lys-Gly) (interchain with G-Cter in SUMO2); alternate. Residues S594 and S622 each carry the phosphoserine modification. K627 participates in a covalent cross-link: Glycyl lysine isopeptide (Lys-Gly) (interchain with G-Cter in SUMO2). A disordered region spans residues 645–713; sequence LDWAKPKGEG…KPQGKKTKFE (69 aa). K649 carries the post-translational modification N6-acetyllysine. A compositionally biased stretch (gly residues) spans 653-702; that stretch reads EGGFGGRGGGRGGFGGRGGGRGGRGGFGGRGRGGFGGRGGFRGGRGGGGD. An asymmetric dimethylarginine mark is found at R659, R663, R669, R673, R676, R682, R684, R690, and R694. The residue at position 697 (R697) is an Asymmetric dimethylarginine; alternate. R697 is modified (omega-N-methylarginine; alternate).

Identified in a IGF2BP1-dependent mRNP granule complex containing untranslated mRNAs. Component of the SWAP complex that consists of NPM1, NCL/nucleolin, PARP1 and SWAP70. Component of a complex which is at least composed of HTATSF1/Tat-SF1, the P-TEFb complex components CDK9 and CCNT1, RNA polymerase II, SUPT5H, and NCL/nucleolin. Interacts with AICDA. Interacts with APTX. Interacts with C1QBP. Interacts with ERBB4. Interacts (via C-terminus) with FMR1 isoform 6 (via N-terminus). Interacts with GZF1; this interaction is important for nucleolar localization of GZF1. Interacts with NSUN2. Interacts with NVL. Interacts (via N-terminus domain) with SETX. Interacts (via RRM1 and C-terminal RRM4/Arg/Gly-rich domains) with TERT; the interaction is important for nucleolar localization of TERT. Interacts with WDR46. Interacts with ZFP36. Interacts with LRRC34. Interacts with RRP1B. Interacts with HNRNPU; this interaction occurs during mitosis. Interacts with RIOK1; RIOK1 recruits NCL to PRMT5 for symmetrically methylation. Interacts with ZBTB7B. Interacts with MDK; this interaction promotes NCL clustering and lateral movements of this complex into lipid rafts leading to MDK internalization. Interacts with HDGF. Interacts with ALKBH2. Interacts with IGFBP5; this interaction is necessary for IGFBP5 localization to the nucleus. Interacts with DDX24 (when ubiquitinated); this interaction may be important during ribosome biogenesis. Post-translationally, some glutamate residues are glycylated by TTLL8. This modification occurs exclusively on glutamate residues and results in a glycine chain on the gamma-carboxyl group. In terms of processing, symmetrically methylated by PRMT5.

The protein localises to the nucleus. It localises to the nucleolus. The protein resides in the cytoplasm. In terms of biological role, nucleolin is the major nucleolar protein of growing eukaryotic cells. It is found associated with intranucleolar chromatin and pre-ribosomal particles. It induces chromatin decondensation by binding to histone H1. It is thought to play a role in pre-rRNA transcription and ribosome assembly. May play a role in the process of transcriptional elongation. Binds RNA oligonucleotides with 5'-UUAGGG-3' repeats more tightly than the telomeric single-stranded DNA 5'-TTAGGG-3' repeats. The polypeptide is Nucleolin (Ncl) (Rattus norvegicus (Rat)).